Reading from the N-terminus, the 1074-residue chain is Phospholipase D1 (1074 aa).

Positions 81 to 212 (VKAQVLEVER…TEFLDVSQLS (132 aa)) constitute a PX domain. The region spanning 219–328 (PKGLEGMIMK…WGGAIEEFIQ (110 aa)) is the PH domain. 2 S-palmitoyl cysteine lipidation sites follow: cysteine 240 and cysteine 241. Residues 459 to 486 (YLWAHHEKLVIIDQSVAFVGGIDLAYGR) form the PLD phosphodiesterase 1 domain. Residues 463–928 (HHEKLVIIDQ…MLGKRDSEMA (466 aa)) form a catalytic region. A phosphoserine mark is found at serine 499, serine 561, and serine 629. A PLD phosphodiesterase 2 domain is found at 891–918 (ELIYVHSKLLIADDNTVIIGSANINDRS).

It belongs to the phospholipase D family. In terms of assembly, interacts with PIP5K1B. Phosphorylated on serine and threonine residues. In terms of processing, it is uncertain whether palmitoylation is on Cys-240 and/or Cys-241. Palmitoylation is required prior to phosphorylation.

It is found in the cytoplasm. The protein localises to the perinuclear region. Its subcellular location is the endoplasmic reticulum membrane. It localises to the golgi apparatus membrane. The protein resides in the late endosome membrane. The enzyme catalyses a 1,2-diacyl-sn-glycero-3-phosphocholine + H2O = a 1,2-diacyl-sn-glycero-3-phosphate + choline + H(+). It carries out the reaction ethanol + a 1,2-diacyl-sn-glycero-3-phosphocholine = 1,2-diacyl-sn-glycero-3-phosphoethanol + choline. The catalysed reaction is 1,2-dihexadecanoyl-sn-glycero-3-phosphocholine + H2O = 1,2-dihexadecanoyl-sn-glycero-3-phosphate + choline + H(+). With respect to regulation, stimulated by phosphatidylinositol 4,5-bisphosphate and phosphatidylinositol 3,4,5-trisphosphate, activated by the phosphokinase C-alpha, by the ADP-ribosylation factor-1 (ARF-1), and to a lesser extent by GTP-binding proteins: RHO A, RAC-1 and CDC42. Inhibited by oleate. Function as phospholipase selective for phosphatidylcholine. Implicated as a critical step in numerous cellular pathways, including signal transduction, membrane trafficking, and the regulation of mitosis. May be involved in the regulation of perinuclear intravesicular membrane traffic. This is Phospholipase D1 from Rattus norvegicus (Rat).